Here is a 481-residue protein sequence, read N- to C-terminus: Glucan endo-1,3-beta-glucosidase 8 (481 aa).

The N-terminal stretch at 1 to 33 (MSNLLALVVGFVIVIGHLGILVNGLGVNWGTMA) is a signal peptide. N-linked (GlcNAc...) asparagine glycosylation is found at asparagine 99 and asparagine 110. Glutamate 119 acts as the Proton donor in catalysis. N-linked (GlcNAc...) asparagine glycosylation is found at asparagine 126 and asparagine 131. The active-site Nucleophile is glutamate 265. Cysteine 367 and cysteine 428 form a disulfide bridge. Asparagine 409 and asparagine 440 each carry an N-linked (GlcNAc...) asparagine glycan. Residue serine 455 is the site of GPI-anchor amidated serine attachment. A propeptide spans 456–481 (SASSFSCSSYSLVVLIVWFLLSGMMF) (removed in mature form).

It belongs to the glycosyl hydrolase 17 family. Contains two additional disulfide bonds.

It is found in the secreted. The protein localises to the cell wall. It localises to the cell membrane. It carries out the reaction Hydrolysis of (1-&gt;3)-beta-D-glucosidic linkages in (1-&gt;3)-beta-D-glucans.. This is Glucan endo-1,3-beta-glucosidase 8 from Arabidopsis thaliana (Mouse-ear cress).